The chain runs to 126 residues: DNA-directed RNA polymerase subunit omega (126 aa).

This sequence belongs to the RNA polymerase subunit omega family. In terms of assembly, the RNAP catalytic core consists of 2 alpha, 1 beta, 1 beta' and 1 omega subunit. When a sigma factor is associated with the core the holoenzyme is formed, which can initiate transcription.

It carries out the reaction RNA(n) + a ribonucleoside 5'-triphosphate = RNA(n+1) + diphosphate. Functionally, promotes RNA polymerase assembly. Latches the N- and C-terminal regions of the beta' subunit thereby facilitating its interaction with the beta and alpha subunits. This is DNA-directed RNA polymerase subunit omega from Rickettsia felis (strain ATCC VR-1525 / URRWXCal2) (Rickettsia azadi).